The primary structure comprises 364 residues: MISRRSTRQIQVGRVAVGGDSPVSVQSMTNTDTRDIEKTAEQLQRLQQAGCDIARVAVLDQDAARAISALVDMSSMPIIADIHFDYRLAIAAMENGAAAIRINPGNLGGEEKTAKVVAAAKMHGLPIRVGVNSGSIEKDLLKKYGYPTADNTQALIESALRNVRLLEKHGFEQIKISIKSSDVLTTVNGYQQLSKVTDYPLHLGVTEAGGLIAGTVKSSVALGILLNQGIGDTLRISLTRDPVEEVRVAFELLRCLGIRQRGPELISCPTCGRTRIDLFSLAEKVEQVVQAMEAPIKVAVMGCVVNGPGEAKEADIGIAGGEGLGIIFKKGVLYKKVAEEQLLEVFLAELRELEEEYQKKHNNV.

Cys268, Cys271, Cys303, and Glu310 together coordinate [4Fe-4S] cluster.

Belongs to the IspG family. The cofactor is [4Fe-4S] cluster.

It carries out the reaction (2E)-4-hydroxy-3-methylbut-2-enyl diphosphate + oxidized [flavodoxin] + H2O + 2 H(+) = 2-C-methyl-D-erythritol 2,4-cyclic diphosphate + reduced [flavodoxin]. It participates in isoprenoid biosynthesis; isopentenyl diphosphate biosynthesis via DXP pathway; isopentenyl diphosphate from 1-deoxy-D-xylulose 5-phosphate: step 5/6. Its function is as follows. Converts 2C-methyl-D-erythritol 2,4-cyclodiphosphate (ME-2,4cPP) into 1-hydroxy-2-methyl-2-(E)-butenyl 4-diphosphate. The sequence is that of 4-hydroxy-3-methylbut-2-en-1-yl diphosphate synthase (flavodoxin) from Desulfotalea psychrophila (strain LSv54 / DSM 12343).